A 329-amino-acid polypeptide reads, in one-letter code: Serine dehydratase-like (329 aa).

Methionine 1 carries the post-translational modification N-acetylmethionine. Lysine 48 bears the N6-(pyridoxal phosphate)lysine mark.

The protein belongs to the serine/threonine dehydratase family. Monomer. Homodimer. Requires pyridoxal 5'-phosphate as cofactor.

It catalyses the reaction L-serine = pyruvate + NH4(+). It carries out the reaction L-threonine = 2-oxobutanoate + NH4(+). The catalysed reaction is L-glutamate = D-glutamate. Its activity is regulated as follows. Serine dehydratase activity is inhibited by manganese chloride, ferrous chloride, cobalt chloride, cupric chloride, nickel chloride and zinc chloride. Glutamate racemase activity is inhibited by manganese chloride, ferrous chloride, cupric chloride and zinc chloride. Catalyzes the pyridoxal-phosphate-dependent dehydrative deamination of L-threonine and L-serine to ammonia and alpha-ketobutyrate and pyruvate, respectively. Also exhibits racemase activity towards L-glutamate and D-glutamate. In Rattus norvegicus (Rat), this protein is Serine dehydratase-like (Sdsl).